A 732-amino-acid chain; its full sequence is Polyribonucleotide nucleotidyltransferase (732 aa).

Mg(2+) contacts are provided by Asp489 and Asp495. One can recognise a KH domain in the interval 556–615 (PKIDTIQIDVDKIKIVIGKGGETIDKIIAETGVKIDIDEEGLVQIFSSDQAAIDRTKEII). Residues 625–693 (GEVYHAKVVR…DKGRVDASMK (69 aa)) enclose the S1 motif domain. The segment at 691-732 (SMKALIPRPPKPEKKEEKASEAKEASNDQASKSQSETASEEK) is disordered. Basic and acidic residues predominate over residues 700 to 716 (PKPEKKEEKASEAKEAS). Positions 717 to 732 (NDQASKSQSETASEEK) are enriched in polar residues.

Belongs to the polyribonucleotide nucleotidyltransferase family. The cofactor is Mg(2+).

It localises to the cytoplasm. It catalyses the reaction RNA(n+1) + phosphate = RNA(n) + a ribonucleoside 5'-diphosphate. Functionally, involved in mRNA degradation. Catalyzes the phosphorolysis of single-stranded polyribonucleotides processively in the 3'- to 5'-direction. This Streptococcus uberis (strain ATCC BAA-854 / 0140J) protein is Polyribonucleotide nucleotidyltransferase.